The primary structure comprises 966 residues: RNA polymerase-associated protein RapA (966 aa).

The region spanning 163–337 (EVGQRLHPRV…FARLKLLDAD (175 aa)) is the Helicase ATP-binding domain. Residue 176-183 (DEVGLGKT) coordinates ATP. The DEAH box motif lies at 283-286 (DEAH). The Helicase C-terminal domain maps to 488–642 (RVEWLITFLK…ICPMGMALFE (155 aa)).

This sequence belongs to the SNF2/RAD54 helicase family. RapA subfamily. As to quaternary structure, interacts with the RNAP. Has a higher affinity for the core RNAP than for the holoenzyme. Its ATPase activity is stimulated by binding to RNAP.

Functionally, transcription regulator that activates transcription by stimulating RNA polymerase (RNAP) recycling in case of stress conditions such as supercoiled DNA or high salt concentrations. Probably acts by releasing the RNAP, when it is trapped or immobilized on tightly supercoiled DNA. Does not activate transcription on linear DNA. Probably not involved in DNA repair. The sequence is that of RNA polymerase-associated protein RapA from Actinobacillus succinogenes (strain ATCC 55618 / DSM 22257 / CCUG 43843 / 130Z).